Here is a 748-residue protein sequence, read N- to C-terminus: Catalase-peroxidase (748 aa).

A cross-link (tryptophyl-tyrosyl-methioninium (Trp-Tyr) (with M-268)) is located at residues 91 to 242; the sequence is WHSAGTYRIG…LAAVQMGLIY (152 aa). The Proton acceptor role is filled by His92. The segment at 194–223 is disordered; sequence DRYGKGKGSSSQGEIPADAHRHGQEQARTA. The tryptophyl-tyrosyl-methioninium (Tyr-Met) (with W-91) cross-link spans 242–268; that stretch reads YVNPEGPEGNPDPLAAAHDIRETFARM. Residue His283 participates in heme b binding. Residues 288 to 310 form a disordered region; the sequence is THGAGDAKHVGREPEGEDMDSQG. Positions 290–301 are enriched in basic and acidic residues; that stretch reads GAGDAKHVGREP.

Belongs to the peroxidase family. Peroxidase/catalase subfamily. As to quaternary structure, homodimer or homotetramer. The cofactor is heme b. Post-translationally, formation of the three residue Trp-Tyr-Met cross-link is important for the catalase, but not the peroxidase activity of the enzyme.

It carries out the reaction H2O2 + AH2 = A + 2 H2O. The catalysed reaction is 2 H2O2 = O2 + 2 H2O. Bifunctional enzyme with both catalase and broad-spectrum peroxidase activity. The sequence is that of Catalase-peroxidase from Herbaspirillum seropedicae.